The primary structure comprises 233 residues: Large ribosomal subunit protein uL1 (233 aa).

This sequence belongs to the universal ribosomal protein uL1 family. Part of the 50S ribosomal subunit.

Binds directly to 23S rRNA. The L1 stalk is quite mobile in the ribosome, and is involved in E site tRNA release. Its function is as follows. Protein L1 is also a translational repressor protein, it controls the translation of the L11 operon by binding to its mRNA. This chain is Large ribosomal subunit protein uL1, found in Psychrobacter cryohalolentis (strain ATCC BAA-1226 / DSM 17306 / VKM B-2378 / K5).